The primary structure comprises 913 residues: Protein translocase subunit SecA (913 aa).

Residues Q87, 105–109 (GEGKT), and D512 each bind ATP. Zn(2+) contacts are provided by C897, C899, C908, and H909.

It belongs to the SecA family. In terms of assembly, monomer and homodimer. Part of the essential Sec protein translocation apparatus which comprises SecA, SecYEG and auxiliary proteins SecDF-YajC and YidC. Zn(2+) serves as cofactor.

It localises to the cell inner membrane. It is found in the cytoplasm. It carries out the reaction ATP + H2O + cellular proteinSide 1 = ADP + phosphate + cellular proteinSide 2.. Part of the Sec protein translocase complex. Interacts with the SecYEG preprotein conducting channel. Has a central role in coupling the hydrolysis of ATP to the transfer of proteins into and across the cell membrane, serving both as a receptor for the preprotein-SecB complex and as an ATP-driven molecular motor driving the stepwise translocation of polypeptide chains across the membrane. The chain is Protein translocase subunit SecA from Pseudomonas syringae pv. syringae (strain B728a).